The primary structure comprises 616 residues: Matrix metalloproteinase-21 (616 aa).

The N-terminal stretch at Met-1–Gln-22 is a signal peptide. A propeptide spanning residues Glu-23–Arg-192 is cleaved from the precursor. A Cysteine switch motif is present at residues Pro-139–Asn-146. Cys-141 is a Zn(2+) binding site. The interval Ser-157–Ser-186 is disordered. N-linked (GlcNAc...) asparagine glycosylation is found at Asn-161, Asn-172, and Asn-181. Residue His-329 participates in Zn(2+) binding. Glu-330 is an active-site residue. Residues His-333 and His-339 each contribute to the Zn(2+) site. Cys-375 and Cys-606 are joined by a disulfide. Hemopexin repeat units lie at residues Glu-376 to Ile-435, Ala-437 to Ile-493, Pro-494 to Val-542, and Phe-549 to Ile-605. N-linked (GlcNAc...) asparagine glycosylation is present at Asn-418. N-linked (GlcNAc...) asparagine glycosylation is present at Asn-597.

It belongs to the peptidase M10A family. It depends on Zn(2+) as a cofactor. Requires Ca(2+) as cofactor. The precursor is cleaved by a furin endopeptidase.

The protein resides in the secreted. In terms of biological role, may play a role in gastrulation-related cell movement. Plays a specialized role in the generation of left-right asymmetry during embryogenesis. May act as a negative regulator of the NOTCH-signaling pathway. The chain is Matrix metalloproteinase-21 (MMP21) from Cynops pyrrhogaster (Japanese fire-bellied newt).